Consider the following 278-residue polypeptide: Checkpoint protein Hus1-like (278 aa).

Belongs to the HUS1 family. In terms of assembly, component of the 9-1-1 checkpoint clamp complex consisting of Rad9 isoform A, Rad1 and Hus1-like; the interactions with Rad1 and Rad9 are direct. This complex probably also forms with Rad9 isoform B, however 9-1-1 complex containing Rad9 isoform A localizes to the nuclear periphery. In terms of tissue distribution, expressed in ovary.

Its subcellular location is the cytoplasm. It localises to the nucleus envelope. Functionally, component of the 9-1-1 checkpoint clamp complex. Involved in both meiotic and somatic DNA damage responses. Essential for activation of the meiotic checkpoint in response to double-strand DNA breaks; required for the S-phase checkpoint but not the G2-M phase checkpoint. Involved in double strand break repair by homologous recombination during meiosis; influences the organization of chromosomal DNA in the meiotic nucleus. The sequence is that of Checkpoint protein Hus1-like from Drosophila melanogaster (Fruit fly).